Here is a 90-residue protein sequence, read N- to C-terminus: UPF0213 protein lwe0147 (90 aa).

Residues Asn5–Ile83 form the GIY-YIG domain.

Belongs to the UPF0213 family.

This Listeria welshimeri serovar 6b (strain ATCC 35897 / DSM 20650 / CCUG 15529 / CIP 8149 / NCTC 11857 / SLCC 5334 / V8) protein is UPF0213 protein lwe0147.